The sequence spans 499 residues: Lysine--tRNA ligase (499 aa).

Residues Glu-408 and Glu-415 each contribute to the Mg(2+) site.

It belongs to the class-II aminoacyl-tRNA synthetase family. Homodimer. The cofactor is Mg(2+).

Its subcellular location is the cytoplasm. The catalysed reaction is tRNA(Lys) + L-lysine + ATP = L-lysyl-tRNA(Lys) + AMP + diphosphate. The chain is Lysine--tRNA ligase from Bacillus mycoides (strain KBAB4) (Bacillus weihenstephanensis).